The chain runs to 53 residues: UPF0391 membrane protein BURPS1106A_A2993 (53 aa).

The next 2 helical transmembrane spans lie at 5-25 (ALIF…GIAA) and 30-50 (IAKI…VLGV).

Belongs to the UPF0391 family.

Its subcellular location is the cell membrane. The sequence is that of UPF0391 membrane protein BURPS1106A_A2993 from Burkholderia pseudomallei (strain 1106a).